We begin with the raw amino-acid sequence, 194 residues long: Cell division protein SepF (194 aa).

Disordered regions lie at residues 35-54 and 159-194; these read DHRSDHASGGALATPSDSSP and SAPSMVSQDHDSVPSSSQQTGAAPVPAWEATSAGGL.

Belongs to the SepF family. In terms of assembly, homodimer. Interacts with FtsZ.

The protein resides in the cytoplasm. Functionally, cell division protein that is part of the divisome complex and is recruited early to the Z-ring. Probably stimulates Z-ring formation, perhaps through the cross-linking of FtsZ protofilaments. Its function overlaps with FtsA. The chain is Cell division protein SepF from Prochlorococcus marinus (strain MIT 9313).